The sequence spans 272 residues: Phosphatidylglycerol--prolipoprotein diacylglyceryl transferase (272 aa).

The next 4 helical transmembrane spans lie at 24–44 (WYALAYIAGLVIGWAYARHLV), 64–84 (LLVYTALGVILGGRLGYVVFY), 99–119 (LWQGGMSFHGGLVGAGVGVML), and 125–145 (GLPTLALGDIVSAVAPIGLFL). An a 1,2-diacyl-sn-glycero-3-phospho-(1'-sn-glycerol)-binding site is contributed by arginine 147. 3 consecutive transmembrane segments (helical) span residues 185 to 205 (AAAEGALLFLLLFVAVRLGAL), 209 to 229 (GLVTGLFAIGYGCARILCEFF), and 245 to 265 (MGMLLSLPLIAAGLALVAFAY).

The protein belongs to the Lgt family.

The protein resides in the cell inner membrane. The catalysed reaction is L-cysteinyl-[prolipoprotein] + a 1,2-diacyl-sn-glycero-3-phospho-(1'-sn-glycerol) = an S-1,2-diacyl-sn-glyceryl-L-cysteinyl-[prolipoprotein] + sn-glycerol 1-phosphate + H(+). The protein operates within protein modification; lipoprotein biosynthesis (diacylglyceryl transfer). Its function is as follows. Catalyzes the transfer of the diacylglyceryl group from phosphatidylglycerol to the sulfhydryl group of the N-terminal cysteine of a prolipoprotein, the first step in the formation of mature lipoproteins. This is Phosphatidylglycerol--prolipoprotein diacylglyceryl transferase from Methylocella silvestris (strain DSM 15510 / CIP 108128 / LMG 27833 / NCIMB 13906 / BL2).